The sequence spans 377 residues: Homoserine O-succinyltransferase (377 aa).

An AB hydrolase-1 domain is found at 50-358 (NAILVCHALS…PSTYGHDSFL (309 aa)). The Nucleophile role is filled by serine 156. Arginine 226 is a substrate binding site. Active-site residues include aspartate 321 and histidine 354. Residue aspartate 355 coordinates substrate.

Belongs to the AB hydrolase superfamily. MetX family. In terms of assembly, homodimer.

It localises to the cytoplasm. It carries out the reaction L-homoserine + succinyl-CoA = O-succinyl-L-homoserine + CoA. It participates in amino-acid biosynthesis; L-methionine biosynthesis via de novo pathway; O-succinyl-L-homoserine from L-homoserine: step 1/1. In terms of biological role, transfers a succinyl group from succinyl-CoA to L-homoserine, forming succinyl-L-homoserine. The polypeptide is Homoserine O-succinyltransferase (Nitrosomonas eutropha (strain DSM 101675 / C91 / Nm57)).